The following is a 287-amino-acid chain: Urease accessory protein UreD (287 aa).

Belongs to the UreD family. In terms of assembly, ureD, UreF and UreG form a complex that acts as a GTP-hydrolysis-dependent molecular chaperone, activating the urease apoprotein by helping to assemble the nickel containing metallocenter of UreC. The UreE protein probably delivers the nickel.

The protein localises to the cytoplasm. Required for maturation of urease via the functional incorporation of the urease nickel metallocenter. This Ureaplasma parvum serovar 3 (strain ATCC 27815 / 27 / NCTC 11736) protein is Urease accessory protein UreD.